The chain runs to 260 residues: MLEINKIHQMNCFDFLDQVENKSVQLAVIDPPYNLSKADWDSFDSHNEFLPFTYRWIDKVLDKLDKDGSLYIFNTPFNCAFICQYLVSKGMIFQNWITWDKRDGMGSAKRGFSTGQETILFFSKSKNHTFNYDEVRVPYESTDRIKHASEKGILKNGKRWFPNPNGRLCGEVWHFSSQRHKEKVNGKTVKLTHITPKPRDLIERIIRASSNPNDLVLDCFMGSGTTAIVAKKLGRNFIGCDMNAEYVNQANFVLNQLEIN.

S-adenosyl-L-methionine contacts are provided by residues C12, D30, K197, 223 to 225 (SGT), and 241 to 242 (DM).

This sequence belongs to the N(4)/N(6)-methyltransferase family. As to quaternary structure, at low concentration exists as a monomer and homodimer. Probably binds to DNA as a monomer.

It carries out the reaction a 2'-deoxyadenosine in DNA + S-adenosyl-L-methionine = an N(6)-methyl-2'-deoxyadenosine in DNA + S-adenosyl-L-homocysteine + H(+). A beta subtype methylase that recognizes the double-stranded sequence 5'-GAAGA-3', methylates A-5 on the top strand, and protects the DNA from cleavage by the MboII endonuclease. It is not known if the cytosine of the complementary sequence TCTTC is also methylated by this enzyme. The chain is Type II methyltransferase M1.MboII from Moraxella bovis.